We begin with the raw amino-acid sequence, 99 residues long: Integration host factor subunit alpha (99 aa).

This sequence belongs to the bacterial histone-like protein family. As to quaternary structure, heterodimer of an alpha and a beta chain.

This protein is one of the two subunits of integration host factor, a specific DNA-binding protein that functions in genetic recombination as well as in transcriptional and translational control. The sequence is that of Integration host factor subunit alpha from Thioalkalivibrio sulfidiphilus (strain HL-EbGR7).